The following is a 433-amino-acid chain: Trigger factor (433 aa).

The PPIase FKBP-type domain occupies 165 to 250 (GDSAIIDFEG…LHNIQEKVKV (86 aa)).

The protein belongs to the FKBP-type PPIase family. Tig subfamily.

The protein resides in the cytoplasm. The enzyme catalyses [protein]-peptidylproline (omega=180) = [protein]-peptidylproline (omega=0). In terms of biological role, involved in protein export. Acts as a chaperone by maintaining the newly synthesized protein in an open conformation. Functions as a peptidyl-prolyl cis-trans isomerase. The protein is Trigger factor of Sulfurimonas denitrificans (strain ATCC 33889 / DSM 1251) (Thiomicrospira denitrificans (strain ATCC 33889 / DSM 1251)).